A 1073-amino-acid chain; its full sequence is Pharyngeal muscle protein 2 (1073 aa).

An SAP domain is found at 9-43 (INDLRVSELKTELEKRGLSTQGVKVVLTVRLNKAL). Disordered regions lie at residues 59 to 186 (VSPM…PEVV), 207 to 305 (ELKE…SMET), and 337 to 388 (LLED…KSML). The span at 91 to 111 (EGNDENVLVEEKEEEEEEEDS) shows a compositional bias: acidic residues. A compositionally biased stretch (basic and acidic residues) spans 112-127 (HDLQIIEDHELEVPSD). The segment covering 128-151 (EKDDTLVEDEEFEEAEQVEPEPEA) has biased composition (acidic residues). 2 stretches are compositionally biased toward basic and acidic residues: residues 156-182 (VEEK…KPVE) and 207-217 (ELKEKPEKEPE). Composition is skewed to acidic residues over residues 223–232 (EPVEQLENEP) and 248–265 (QDGE…DIEI). Residues 277–293 (AEEKVEKKEKKPEEIPH) are compositionally biased toward basic and acidic residues. The segment covering 366-386 (ASTPQATPSKAASSSAGSGKS) has biased composition (low complexity). One can recognise an RRM domain in the interval 396 to 478 (TSIWIRGMTP…RVLRVEKVSE (83 aa)). Disordered regions lie at residues 481–759 (LTSS…ERRR), 845–917 (QEHR…RNLV), and 1015–1073 (SQNA…RGNY). Composition is skewed to low complexity over residues 496-505 (EAASTMSTSP) and 513-524 (PVVTTTTTTSAA). Positions 573–587 (ITFDREEESNRDSRR) are enriched in basic and acidic residues. Residues 588–622 (TIAAAPPARTSRMARSPLRAPLRAARGSESSRSST) show a composition bias toward low complexity. Over residues 674 to 689 (VTVQQDAPRASYQTEQ) the composition is skewed to polar residues. 2 stretches are compositionally biased toward basic and acidic residues: residues 707-727 (VSPD…RRAP) and 742-759 (PPRR…ERRR). Composition is skewed to low complexity over residues 901–917 (SSSN…RNLV), 1015–1026 (SQNAATPSTSTS), and 1034–1060 (QWQQ…SSSN).

As to expression, expressed in most tissues including the hypodermal, muscle, neuronal, vulval and intestinal tissues. Isoform a: Expressed in the pharynx, nerve ring, intestine, neurons and ventral nerve cord.

Its subcellular location is the nucleus. Involved in pharyngeal muscle development and ensures pharyngeal grinder function during feeding. Plays a role in the defense against the accumulation of ingested live pathogenic bacteria in the intestine. Has a role in the determination of life span. This is Pharyngeal muscle protein 2 from Caenorhabditis elegans.